A 416-amino-acid polypeptide reads, in one-letter code: Probable pectate lyase 8 (416 aa).

Positions 1 to 24 (MAVTKLILFASALLLTALFIGVNA) are cleaved as a signal peptide. N-linked (GlcNAc...) asparagine glycosylation is found at asparagine 23, asparagine 28, and asparagine 52. Ca(2+) contacts are provided by aspartate 214, aspartate 238, and aspartate 242. Arginine 294 is an active-site residue.

Belongs to the polysaccharide lyase 1 family. The cofactor is Ca(2+).

The catalysed reaction is Eliminative cleavage of (1-&gt;4)-alpha-D-galacturonan to give oligosaccharides with 4-deoxy-alpha-D-galact-4-enuronosyl groups at their non-reducing ends.. It functions in the pathway glycan metabolism; pectin degradation; 2-dehydro-3-deoxy-D-gluconate from pectin: step 2/5. The polypeptide is Probable pectate lyase 8 (Arabidopsis thaliana (Mouse-ear cress)).